The primary structure comprises 88 residues: Putative membrane protein insertion efficiency factor (88 aa).

The interval Val68–Leu88 is disordered. Positions Thr75 to Leu88 are enriched in basic and acidic residues.

Belongs to the UPF0161 family.

Its subcellular location is the cell inner membrane. In terms of biological role, could be involved in insertion of integral membrane proteins into the membrane. The chain is Putative membrane protein insertion efficiency factor from Burkholderia ambifaria (strain MC40-6).